Reading from the N-terminus, the 128-residue chain is 3-aminoacrylate deaminase RutC (128 aa).

The protein belongs to the RutC family. As to quaternary structure, homotrimer.

The catalysed reaction is (Z)-3-aminoacrylate + H2O + H(+) = 3-oxopropanoate + NH4(+). In terms of biological role, involved in pyrimidine catabolism. Catalyzes the deamination of 3-aminoacrylate to malonic semialdehyde, a reaction that can also occur spontaneously. RutC may facilitate the reaction and modulate the metabolic fitness, rather than catalyzing essential functions. This Escherichia coli O111:H- (strain 11128 / EHEC) protein is 3-aminoacrylate deaminase RutC.